Consider the following 1030-residue polypeptide: Protein KRBA1 (1030 aa).

Disordered stretches follow at residues 27 to 56, 80 to 208, 225 to 255, 281 to 505, and 634 to 788; these read EPGR…GQPR, KGAM…NSPL, HPET…GSPP, EAQD…GLEN, and GGPS…PASS. Ser-101 carries the post-translational modification Phosphoserine. Low complexity predominate over residues 102–114; that stretch reads PEAAAAREPCPLR. The segment covering 124–143 has biased composition (polar residues); sequence PTSQPHLATTPTDSSCSSGP. Basic and acidic residues predominate over residues 157–168; the sequence is TADKPWPTRKEG. Ser-177, Ser-182, Ser-184, Ser-229, Ser-253, and Ser-355 each carry phosphoserine. The span at 372–389 shows a compositional bias: low complexity; sequence PEAQAASASSSPLEALEA. The span at 397-418 shows a compositional bias: polar residues; sequence NGSSPSQLPPTSCSQNPQPGDS. Residues 419 to 437 are compositionally biased toward basic and acidic residues; that stretch reads RSQKPELQPHRSHSEEATR. 2 stretches are compositionally biased toward low complexity: residues 485-502 and 642-651; these read QGQH…PLQG and PGSSSSFSGS. The segment covering 654-674 has biased composition (basic and acidic residues); the sequence is EDPRPEPDLWKPLPQERDRLP. Residues 689–698 are compositionally biased toward gly residues; it reads TPAGSSGGSP. The segment covering 760–784 has biased composition (pro residues); sequence QGPPELPSESPPPELPPPEAAPPVL. A coiled-coil region spans residues 799-832; sequence LQQELHSLGAALAEKLDRLATALAGLAQEVATMR. Residues 870 to 887 show a composition bias toward basic residues; it reads RHLPYWRQKGPTRPKPKI. Residues 870–1030 are disordered; the sequence is RHLPYWRQKG…EHRDPRWGAH (161 aa). Residues 913 to 923 show a composition bias toward pro residues; sequence PLPPDAPPAEP. Low complexity-rich tracts occupy residues 929–953 and 966–984; these read SSSQ…LLAH and PAAL…ADAD. Positions 1019–1030 are enriched in basic and acidic residues; that stretch reads GGEHRDPRWGAH.

Expressed in brain (cerebellum).

The sequence is that of Protein KRBA1 (KRBA1) from Homo sapiens (Human).